The following is a 487-amino-acid chain: 3-octaprenyl-4-hydroxybenzoate carboxy-lyase (487 aa).

Residue Asn172 participates in Mn(2+) binding. Prenylated FMN-binding positions include 175 to 177, 189 to 191, and 194 to 195; these read IYR, RWL, and RG. Glu238 contributes to the Mn(2+) binding site. Asp287 acts as the Proton donor in catalysis.

The protein belongs to the UbiD family. As to quaternary structure, homohexamer. Prenylated FMN is required as a cofactor. It depends on Mn(2+) as a cofactor.

Its subcellular location is the cell membrane. It catalyses the reaction a 4-hydroxy-3-(all-trans-polyprenyl)benzoate + H(+) = a 2-(all-trans-polyprenyl)phenol + CO2. Its pathway is cofactor biosynthesis; ubiquinone biosynthesis. Its function is as follows. Catalyzes the decarboxylation of 3-octaprenyl-4-hydroxy benzoate to 2-octaprenylphenol, an intermediate step in ubiquinone biosynthesis. This Actinobacillus pleuropneumoniae serotype 3 (strain JL03) protein is 3-octaprenyl-4-hydroxybenzoate carboxy-lyase.